We begin with the raw amino-acid sequence, 247 residues long: Adenosylcobinamide-GDP ribazoletransferase (247 aa).

The next 5 helical transmembrane spans lie at 34-54 (IITF…VFMV), 57-77 (AWCG…LMTG), 113-133 (GGLA…ELAL), 138-158 (ILAS…LLMY), and 194-214 (VLLL…AIFI).

It belongs to the CobS family. The cofactor is Mg(2+).

Its subcellular location is the cell inner membrane. The enzyme catalyses alpha-ribazole + adenosylcob(III)inamide-GDP = adenosylcob(III)alamin + GMP + H(+). The catalysed reaction is alpha-ribazole 5'-phosphate + adenosylcob(III)inamide-GDP = adenosylcob(III)alamin 5'-phosphate + GMP + H(+). Its pathway is cofactor biosynthesis; adenosylcobalamin biosynthesis; adenosylcobalamin from cob(II)yrinate a,c-diamide: step 7/7. Joins adenosylcobinamide-GDP and alpha-ribazole to generate adenosylcobalamin (Ado-cobalamin). Also synthesizes adenosylcobalamin 5'-phosphate from adenosylcobinamide-GDP and alpha-ribazole 5'-phosphate. The chain is Adenosylcobinamide-GDP ribazoletransferase from Shigella flexneri serotype 5b (strain 8401).